We begin with the raw amino-acid sequence, 154 residues long: Endoribonuclease YbeY (154 aa).

Positions 114, 118, and 124 each coordinate Zn(2+).

Belongs to the endoribonuclease YbeY family. The cofactor is Zn(2+).

Its subcellular location is the cytoplasm. Functionally, single strand-specific metallo-endoribonuclease involved in late-stage 70S ribosome quality control and in maturation of the 3' terminus of the 16S rRNA. The sequence is that of Endoribonuclease YbeY from Aggregatibacter actinomycetemcomitans (Actinobacillus actinomycetemcomitans).